A 258-amino-acid chain; its full sequence is Global transcriptional regulator CodY (258 aa).

The segment at 1–156 (MSSLLTKTRM…SATIVGMEML (156 aa)) is GAF domain. Residues 204–223 (ASKIADKVGITRSVIVNALR) constitute a DNA-binding region (H-T-H motif).

This sequence belongs to the CodY family.

Its subcellular location is the cytoplasm. DNA-binding global transcriptional regulator which is involved in the adaptive response to starvation and acts by directly or indirectly controlling the expression of numerous genes in response to nutrient availability. During rapid exponential growth, CodY is highly active and represses genes whose products allow adaptation to nutrient depletion. The chain is Global transcriptional regulator CodY from Clostridium beijerinckii (strain ATCC 51743 / NCIMB 8052) (Clostridium acetobutylicum).